Reading from the N-terminus, the 215-residue chain is ATP phosphoribosyltransferase (215 aa).

Belongs to the ATP phosphoribosyltransferase family. Short subfamily. As to quaternary structure, heteromultimer composed of HisG and HisZ subunits.

Its subcellular location is the cytoplasm. It carries out the reaction 1-(5-phospho-beta-D-ribosyl)-ATP + diphosphate = 5-phospho-alpha-D-ribose 1-diphosphate + ATP. The protein operates within amino-acid biosynthesis; L-histidine biosynthesis; L-histidine from 5-phospho-alpha-D-ribose 1-diphosphate: step 1/9. Functionally, catalyzes the condensation of ATP and 5-phosphoribose 1-diphosphate to form N'-(5'-phosphoribosyl)-ATP (PR-ATP). Has a crucial role in the pathway because the rate of histidine biosynthesis seems to be controlled primarily by regulation of HisG enzymatic activity. This chain is ATP phosphoribosyltransferase, found in Lachnoclostridium phytofermentans (strain ATCC 700394 / DSM 18823 / ISDg) (Clostridium phytofermentans).